A 177-amino-acid polypeptide reads, in one-letter code: Meiotically up-regulated gene 121 protein (177 aa).

A signal peptide spans 1 to 23 (MKGFVVISRFILTLFILITPGLA). Asn121 carries N-linked (GlcNAc...) asparagine glycosylation.

The protein resides in the endoplasmic reticulum. It is found in the golgi apparatus. In terms of biological role, has a role in meiosis. This is Meiotically up-regulated gene 121 protein (mug121) from Schizosaccharomyces pombe (strain 972 / ATCC 24843) (Fission yeast).